The sequence spans 170 residues: Tachykinin-4 (170 aa).

Residues 1–16 (MLPLLALFLLIGPAVS) form the signal peptide. Residues 17–54 (TTTRDREDLTFGAEAESWVTVNLKGIPVPSIELKLQEL) constitute a propeptide that is removed on maturation. A Methionine amide modification is found at Met-66. The propeptide occupies 67–170 (GKRVEGVHPI…SQMMPRPSRP (104 aa)). Positions 107-170 (QETNHQSAGP…SQMMPRPSRP (64 aa)) are disordered. Residues 123-140 (SLQSQRGRSEPPNHQQHV) are compositionally biased toward polar residues.

It belongs to the tachykinin family.

The protein localises to the secreted. Tachykinins are active peptides which excite neurons, evoke behavioral responses, are potent vasodilators and secretagogues, and contract (directly or indirectly) many smooth muscles. Hemokinin induces plasma extravasation, mast cell degranulation, muscle contraction, salivary secretion and scratching behavior. Increases sperm motility. Induces potent analgesic effects and may play a role in pain modulation. Promotes survival of bone marrow B lineage cells and of cultured LPS-stimulated pre-B cells and may act as an autocrine factor required for B-cell survival and proliferation. Lowers systemic arterial pressure following intravenous injection. Induces interferon-gamma production and may play a role in the inflammatory response. Shows potent affinity and specificity for the NK-1 receptor. This Rattus norvegicus (Rat) protein is Tachykinin-4.